We begin with the raw amino-acid sequence, 403 residues long: MEFDRMLIRYGELSTKGKNRKQFVTRLAQNVKRAMKDLPEVRIHGERDRMYIILNGADYQLAEERLKPIFGIQSFSPAVRVNLDLDEVKAAALSLVQDAHEENGTFKVAARRSHREFPLDSNEINQEIGAHVLQNIEDLTVNVKNPDVKLTIDVRKEGVFLSCRTILGAAGLPVGSSGRAMLMLSGGIDSPVAGYLAQKRGVEIEAVHFHSPPYTSEQAKQKAIDLAGKLAKYSGQVQMHIVPFTEIQEVIKQQIPESVIMTVTRRMMLRITDELRRKRNGLAIVNGESLGQVASQTLESMLAINAVTATPIIRPVVAMDKNEIIQIAQKIDTYNLSVQPFEDCCTIFTPPSPKTKPKLDKIEHYESFTDFDALILKALENVETIAVNVAENAEIKDEFADLF.

In terms of domain architecture, THUMP spans 60–165 (QLAEERLKPI…KEGVFLSCRT (106 aa)). ATP contacts are provided by residues 183-184 (ML), 208-209 (HF), Arg-265, Gly-287, and Gln-296.

This sequence belongs to the ThiI family.

It localises to the cytoplasm. It carries out the reaction [ThiI sulfur-carrier protein]-S-sulfanyl-L-cysteine + a uridine in tRNA + 2 reduced [2Fe-2S]-[ferredoxin] + ATP + H(+) = [ThiI sulfur-carrier protein]-L-cysteine + a 4-thiouridine in tRNA + 2 oxidized [2Fe-2S]-[ferredoxin] + AMP + diphosphate. The catalysed reaction is [ThiS sulfur-carrier protein]-C-terminal Gly-Gly-AMP + S-sulfanyl-L-cysteinyl-[cysteine desulfurase] + AH2 = [ThiS sulfur-carrier protein]-C-terminal-Gly-aminoethanethioate + L-cysteinyl-[cysteine desulfurase] + A + AMP + 2 H(+). The protein operates within cofactor biosynthesis; thiamine diphosphate biosynthesis. Functionally, catalyzes the ATP-dependent transfer of a sulfur to tRNA to produce 4-thiouridine in position 8 of tRNAs, which functions as a near-UV photosensor. Also catalyzes the transfer of sulfur to the sulfur carrier protein ThiS, forming ThiS-thiocarboxylate. This is a step in the synthesis of thiazole, in the thiamine biosynthesis pathway. The sulfur is donated as persulfide by IscS. This Listeria innocua serovar 6a (strain ATCC BAA-680 / CLIP 11262) protein is Probable tRNA sulfurtransferase.